The primary structure comprises 342 residues: D-erythrose-4-phosphate dehydrogenase (342 aa).

11–12 serves as a coordination point for NAD(+); it reads RV. Residues 153 to 155, R199, 212 to 213, and R235 each bind substrate; these read SCT and TK. Catalysis depends on C154, which acts as the Nucleophile. N317 serves as a coordination point for NAD(+).

The protein belongs to the glyceraldehyde-3-phosphate dehydrogenase family. Epd subfamily. Homotetramer.

The protein resides in the cytoplasm. It carries out the reaction D-erythrose 4-phosphate + NAD(+) + H2O = 4-phospho-D-erythronate + NADH + 2 H(+). Its pathway is cofactor biosynthesis; pyridoxine 5'-phosphate biosynthesis; pyridoxine 5'-phosphate from D-erythrose 4-phosphate: step 1/5. Its function is as follows. Catalyzes the NAD-dependent conversion of D-erythrose 4-phosphate to 4-phosphoerythronate. The polypeptide is D-erythrose-4-phosphate dehydrogenase (Pseudoalteromonas atlantica (strain T6c / ATCC BAA-1087)).